A 233-amino-acid polypeptide reads, in one-letter code: Beta-fibrinogenase brevinase (233 aa).

The 224-residue stretch at 1-224 (VIGGDECNIN…YIDWIQSIIA (224 aa)) folds into the Peptidase S1 domain. 6 disulfide bridges follow: C7–C138, C25–C41, C73–C231, C117–C185, C149–C164, and C175–C200. The active-site Charge relay system is H40. A glycan (N-linked (GlcNAc...) asparagine) is linked at N54. Catalysis depends on D85, which acts as the Charge relay system. N129 is a glycosylation site (N-linked (GlcNAc...) asparagine). Positions 176–178 (RGD) match the Cell attachment site motif. The active-site Charge relay system is the S179. N226 carries an N-linked (GlcNAc...) asparagine glycan.

The protein belongs to the peptidase S1 family. Snake venom subfamily. As to quaternary structure, heterodimer of the brevinase A chain and the brevinase B chain. Expressed by the venom gland.

It is found in the secreted. Its activity is regulated as follows. The fibrinolytic activity is completely inhibited by PMSF, diisopropylfluorophosphate (DFP), pefabloc, dithiothreitol (DTT) and Zn(2+), but not by Pepstatin A, E64, iodoacetate, chymostatin, tosyl-Lphenylalanine chloromethyl ketone (TPCK), soybean trypsin inhibitor (SBTI), phosphoramidon, Ca(2+), Co(2+), Cu(2+), Fe(2+), Mg(2+), Mn(2+), K(+), and Na(+). Its function is as follows. Snake venom serine protease that has fibrinogenolytic activities. Preferentially cleaves the Bbeta-chain (FGB) and more slowly the Aa-chain (FGA) of fibrinogen, but does not affect the gamma-chain. Also has fibrinolytic activity. May play a role in antithrombotic reaction as well as thrombolytic reaction. This chain is Beta-fibrinogenase brevinase, found in Gloydius blomhoffii (Mamushi).